A 230-amino-acid polypeptide reads, in one-letter code: Ribonuclease 3 (230 aa).

An RNase III domain is found at 5–125; it reads YSRFYNILGY…VIGAIYLDSD (121 aa). Glutamate 40 provides a ligand contact to Mg(2+). Aspartate 44 is a catalytic residue. Positions 111 and 114 each coordinate Mg(2+). Glutamate 114 is a catalytic residue. Positions 153–223 constitute a DRBM domain; sequence DSKSKLQEIL…AEKMIEMLSQ (71 aa).

Belongs to the ribonuclease III family. Homodimer. Requires Mg(2+) as cofactor.

It is found in the cytoplasm. The catalysed reaction is Endonucleolytic cleavage to 5'-phosphomonoester.. Functionally, digests double-stranded RNA. Involved in the processing of primary rRNA transcript to yield the immediate precursors to the large and small rRNAs (23S and 16S). Processes some mRNAs, and tRNAs when they are encoded in the rRNA operon. Processes pre-crRNA and tracrRNA of type II CRISPR loci if present in the organism. This is Ribonuclease 3 from Francisella tularensis subsp. holarctica (strain FTNF002-00 / FTA).